The sequence spans 202 residues: MSRYRGPRVKIIRRLGALPGLTNKTLKSKPGYINQSTSNKKVSQYRIRLEEKQKLRFHYGLTERQLLKYVRIARKAKGSTGQVLLQLLEMRLDNIIFRLGMAPTIPGARQLVNHRHILINNSTVDIPSYNCKPKDVITIKDRPKSQSIITKNLNSFQKQKIPNHLTFDLMQVKGLVNQIIDREWIFLKINELLVVEYYSRQV.

Residues 90–154 (MRLDNIIFRL…SQSIITKNLN (65 aa)) form the S4 RNA-binding domain.

Belongs to the universal ribosomal protein uS4 family. Part of the 30S ribosomal subunit. Contacts protein S5. The interaction surface between S4 and S5 is involved in control of translational fidelity.

It localises to the plastid. The protein localises to the chloroplast. In terms of biological role, one of the primary rRNA binding proteins, it binds directly to 16S rRNA where it nucleates assembly of the body of the 30S subunit. With S5 and S12 plays an important role in translational accuracy. This Ricciocarpos natans (Liverwort) protein is Small ribosomal subunit protein uS4c (rps4).